The following is a 414-amino-acid chain: 2,3-diketo-5-methylthiopentyl-1-phosphate enolase (414 aa).

The active-site Proton acceptor is Lys99. Substrate contacts are provided by residues Lys148, 174 to 177 (KDDE), His265, Gly338, and 360 to 361 (GG). 3 residues coordinate Mg(2+): Lys174, Asp176, and Glu177. Lys174 is modified (N6-carboxylysine).

Belongs to the RuBisCO large chain family. Type IV subfamily. As to quaternary structure, homodimer. Mg(2+) serves as cofactor.

It carries out the reaction 5-methylsulfanyl-2,3-dioxopentyl phosphate = 2-hydroxy-5-methylsulfanyl-3-oxopent-1-enyl phosphate. It functions in the pathway amino-acid biosynthesis; L-methionine biosynthesis via salvage pathway; L-methionine from S-methyl-5-thio-alpha-D-ribose 1-phosphate: step 3/6. Its function is as follows. Catalyzes the enolization of 2,3-diketo-5-methylthiopentyl-1-phosphate (DK-MTP-1-P) into 2-hydroxy-3-keto-5-methylthiopentenyl-1-phosphate (HK-MTPenyl-1-P). This Bacillus cereus (strain G9842) protein is 2,3-diketo-5-methylthiopentyl-1-phosphate enolase.